The following is a 325-amino-acid chain: G-protein coupled receptor E6 (325 aa).

The next 7 membrane-spanning stretches (helical) occupy residues 45–65, 71–91, 106–126, 145–165, 198–218, 233–253, and 274–294; these read LFGTMLEGVFLGIVLTMMGFF, FTPSSNIWLFAGCVAIALWLM, IVTENLALFCSLLGGALNVGM, PAAICTYIFWAVVGSLLVIAV, LVAKFLMYLVFVCIVSVGTAL, AICVNVVLVTLPNTFIWLTAM, and VFIYLSSVPMLVILFVYMFTG.

This sequence belongs to the G-protein coupled receptor 1 family.

Its subcellular location is the host membrane. The sequence is that of G-protein coupled receptor E6 (E6) from Equus caballus (Horse).